The chain runs to 404 residues: Argininosuccinate synthase (404 aa).

Residue 9 to 17 (AYSGGLDTS) participates in ATP binding. Tyr-86 is an L-citrulline binding site. Gly-116 contacts ATP. 3 residues coordinate L-aspartate: Thr-118, Asn-122, and Asp-123. Asn-122 is an L-citrulline binding site. Residues Arg-126, Ser-174, Ser-183, Glu-259, and Tyr-271 each contribute to the L-citrulline site.

Belongs to the argininosuccinate synthase family. Type 1 subfamily. Homotetramer.

The protein localises to the cytoplasm. The catalysed reaction is L-citrulline + L-aspartate + ATP = 2-(N(omega)-L-arginino)succinate + AMP + diphosphate + H(+). It functions in the pathway amino-acid biosynthesis; L-arginine biosynthesis; L-arginine from L-ornithine and carbamoyl phosphate: step 2/3. This is Argininosuccinate synthase from Listeria monocytogenes serotype 4b (strain CLIP80459).